A 352-amino-acid chain; its full sequence is C-C chemokine receptor type 5 (352 aa).

The Extracellular segment spans residues 1–30 (MDYQVSSPTYDIDYYTSEPCQKINVKQIAA). Y3 carries the sulfotyrosine modification. O-linked (GalNAc...) serine glycosylation is found at S6 and S7. Sulfotyrosine is present on residues Y10, Y14, and Y15. 2 cysteine pairs are disulfide-bonded: C20/C269 and C101/C178. The chain crosses the membrane as a helical span at residues 31–58 (RLLPPLYSLVFIFGFVGNILVVLILINC). Topologically, residues 59 to 68 (KRLKSMTDIY) are cytoplasmic. A helical transmembrane segment spans residues 69 to 89 (LLNLAISDLLFLLTVPFWAHY). Over 90 to 102 (AAAQWDFGNTMCQ) the chain is Extracellular. Residues 103 to 124 (LLTGLYFIGFFSGIFFIILLTI) traverse the membrane as a helical segment. The Cytoplasmic segment spans residues 125-141 (DRYLAIVHAVFALKART). A helical transmembrane segment spans residues 142–166 (VTFGVVTSVITWVVAVFASLPGIIF). Residues 167–198 (TRSQREGLHYTCSSHFPYSQYQFWKNFQTLKI) lie on the Extracellular side of the membrane. A helical membrane pass occupies residues 199 to 218 (VILGLVLPLLVMVICYSGIL). Topologically, residues 219–235 (KTLLRCRNEKKRHRAVR) are cytoplasmic. Residues 236–260 (LIFTIMIVYFLFWAPYNIVLLLNTF) form a helical membrane-spanning segment. Residues 261-277 (QEFFGLNNCSSSNRLDQ) lie on the Extracellular side of the membrane. Residues 278–301 (AMQVTETLGMTHCCINPIIYAFVG) traverse the membrane as a helical segment. Topologically, residues 302–352 (EKFRNYLLVFFQKHIAKRFCKCCSIFQQEASERASSVYTRSTGEQEISVGL) are cytoplasmic. 3 S-palmitoyl cysteine lipidation sites follow: C321, C323, and C324. 4 positions are modified to phosphoserine; by BARK1: S336, S337, S342, and S349.

Belongs to the G-protein coupled receptor 1 family. As to quaternary structure, interacts with PRAF2. Efficient ligand binding to CCL3/MIP-1alpha and CCL4/MIP-1beta requires sulfation, O-glycosylation and sialic acid modifications. Glycosylation on Ser-6 is required for efficient binding of CCL4. Interacts with GRK2. Interacts with ARRB1 and ARRB2. Interacts with CNIH4. Interacts with S100A4; this interaction stimulates T-lymphocyte chemotaxis. Post-translationally, sulfated on at least 2 of the N-terminal tyrosines. Sulfation is required for efficient binding of the chemokines, CCL3 and CCL4. In terms of processing, palmitoylation in the C-terminal is important for cell surface expression. Phosphorylation on serine residues in the C-terminal is stimulated by binding CC chemokines especially by APO-RANTES. Post-translationally, O-glycosylated, but not N-glycosylated. Ser-6 appears to be the major site even if Ser-7 may be also O-glycosylated. Also sialylated glycans present which contribute to chemokine binding. Thr-16 and Ser-17 may also be glycosylated and, if so, with small moieties such as a T-antigen.

The protein localises to the cell membrane. Functionally, receptor for a number of inflammatory CC-chemokines including CCL3/MIP-1-alpha, CCL4/MIP-1-beta and RANTES and subsequently transduces a signal by increasing the intracellular calcium ion level. May play a role in the control of granulocytic lineage proliferation or differentiation. Participates in T-lymphocyte migration to the infection site by acting as a chemotactic receptor. The polypeptide is C-C chemokine receptor type 5 (CCR5) (Cercocebus galeritus (Tana river mangabey)).